The sequence spans 217 residues: Ras-related protein Rab-39A (217 aa).

6 residues coordinate GTP: S17, G20, K21, S22, C23, and T44. S22 serves as a coordination point for Mg(2+). Residues 39 to 47 are switch-I; that stretch reads PACDPTVGV. T44 and D68 together coordinate Mg(2+). GTP contacts are provided by G71, H127, K128, D130, A158, and K159. The interval 71–87 is switch-II; sequence GQERFRSITRSYYRNSV. S-geranylgeranyl cysteine attachment occurs at residues C215 and C217. A Cysteine methyl ester modification is found at C217.

It belongs to the small GTPase superfamily. Rab family. As to quaternary structure, interacts (GDP-bound) with C9orf72; C9orf72 acts as a GEF for RAB39A. Interacts (GTP-bound) with HOPS complex components VPS39 and VPS41, and STX17; interaction between HOPS components and RAB39A contributes to obtaining a functional HOPS complex that promotes membrane fusion driven by STX17-SNAP29-VAMP8. Interacts with BECN1. Probably associates with the PI3K (PI3KC3/PI3K-III/class III phosphatidylinositol 3-kinase) complex. Interacts with UACA. Interacts with isoform a of RASSF1. Does not interact with isoform c of RASSF1. The cofactor is Mg(2+). Post-translationally, prenylated. Prenylation is required for association with cellular membranes.

The protein resides in the cell membrane. Its subcellular location is the cytoplasmic vesicle. It localises to the phagosome membrane. It is found in the lysosome membrane. The protein localises to the autolysosome membrane. The enzyme catalyses GTP + H2O = GDP + phosphate + H(+). Regulated by guanine nucleotide exchange factors (GEFs) including c9Orf72, which promote the exchange of bound GDP for free GTP. Regulated by GTPase activating proteins (GAPs) which increase the GTP hydrolysis activity. Inhibited by GDP dissociation inhibitors (GDIs). Its function is as follows. The small GTPases Rab are key regulators of intracellular membrane trafficking, from the formation of transport vesicles to their fusion with membranes. Rabs cycle between an inactive GDP-bound form and an active GTP-bound form that is able to recruit to membranes different sets of downstream effectors directly responsible for vesicle formation, movement, tethering and fusion. RAB39A regulates autophagosome-lysosome fusion via recruitment of the HOPS endosomal tethering complex onto lysosomes; this process involves lysosomal RAB39A and autophagosomal RAB2A recruitment of HOPS subcomplexes VPS41-VPS16-VPS18-VPS33A and VPS39-VPS11, respectively, which assemble into a functional complex to mediate membrane tethering and SNAREs-driven membrane fusion. Also negatively regulates lipopolysaccharide (LPS)-induced autophagosome formation in macrophages, possibly by implicating PI3K. Promotes the delivery of MHC-I molecules from the ER to phagosomes and the generation of peptide-loaded MHC-I complexes in phagosomes, thus enhancing antigen cross-presentation by dendritic cells. Plays a role in the maturation and acidification of phagosomes that engulf pathogens, such as S.aureus and M.tuberculosis. Plays a role in the fusion of phagosomes with lysosomes. May be involved in multiple neurite formation. This Homo sapiens (Human) protein is Ras-related protein Rab-39A.